The following is a 413-amino-acid chain: Probable aminotransferase sirI (413 aa).

Residue lysine 255 is modified to N6-(pyridoxal phosphate)lysine.

It belongs to the class-I pyridoxal-phosphate-dependent aminotransferase family. The cofactor is pyridoxal 5'-phosphate.

Its pathway is mycotoxin biosynthesis. Probable aminotransferase; part of the gene cluster that mediates the biosynthesis of sirodesmin PL, an epipolythiodioxopiperazine (ETP) characterized by a disulfide bridged cyclic dipeptide and that acts as a phytotoxin which is involved in the blackleg didease of canola. SirD catalyzes the O-prenylation of L-tyrosine (L-Tyr) in the presence of dimethylallyl diphosphate (DMAPP) to yield 4-O-dimethylallyl-L-Tyr, and therefore represents probably the first pathway-specific enzyme in the biosynthesis of sirodesmin PL. 4-O-dimethylallyl-L-Tyr, then undergoes condensation with L-Ser in a reaction catalyzed by the non-ribosomal peptide synthase sirP to form the diketopiperazine (DKP) backbone. Further bishydroxylation of the DKP performed by the cytochrome P450 monooxygenase sirC leads to the production of the intermediate phomamide. This step is essential to form the reactive thiol group required for toxicity of sirodesmin PL. The next steps of sirodesmin biosynthesis are not well understood yet, but some predictions could be made from intermediate compounds identification. Phomamide is converted into phomalizarine via oxidation, probably by sirT. Further oxidation, methylation (by sirM or sirN) and reduction steps convert phomalizarine to deacetyl sirodesmin. Finally, acetyltransferase sirH probably acetylates deacetyl sirodesmin to produce sirodesmin PL. This Leptosphaeria maculans (Blackleg fungus) protein is Probable aminotransferase sirI.